We begin with the raw amino-acid sequence, 155 residues long: S-ribosylhomocysteine lyase (155 aa).

The Fe cation site is built by histidine 58, histidine 62, and cysteine 125.

It belongs to the LuxS family. As to quaternary structure, homodimer. It depends on Fe cation as a cofactor.

The enzyme catalyses S-(5-deoxy-D-ribos-5-yl)-L-homocysteine = (S)-4,5-dihydroxypentane-2,3-dione + L-homocysteine. In terms of biological role, involved in the synthesis of autoinducer 2 (AI-2) which is secreted by bacteria and is used to communicate both the cell density and the metabolic potential of the environment. The regulation of gene expression in response to changes in cell density is called quorum sensing. Catalyzes the transformation of S-ribosylhomocysteine (RHC) to homocysteine (HC) and 4,5-dihydroxy-2,3-pentadione (DPD). The sequence is that of S-ribosylhomocysteine lyase from Helicobacter pylori (strain HPAG1).